The chain runs to 336 residues: Glyceraldehyde-3-phosphate dehydrogenase (336 aa).

NAD(+) contacts are provided by residues 12 to 13, Asp-34, and Ser-120; that span reads RI. D-glyceraldehyde 3-phosphate is bound by residues 150 to 152, Thr-181, Arg-198, 211 to 212, and Arg-234; these read SCT and TG. Cys-151 functions as the Nucleophile in the catalytic mechanism. Asn-316 contributes to the NAD(+) binding site.

It belongs to the glyceraldehyde-3-phosphate dehydrogenase family. Homotetramer.

It localises to the cytoplasm. The enzyme catalyses D-glyceraldehyde 3-phosphate + phosphate + NAD(+) = (2R)-3-phospho-glyceroyl phosphate + NADH + H(+). Its pathway is carbohydrate degradation; glycolysis; pyruvate from D-glyceraldehyde 3-phosphate: step 1/5. Catalyzes the oxidative phosphorylation of glyceraldehyde 3-phosphate (G3P) to 1,3-bisphosphoglycerate (BPG) using the cofactor NAD. The first reaction step involves the formation of a hemiacetal intermediate between G3P and a cysteine residue, and this hemiacetal intermediate is then oxidized to a thioester, with concomitant reduction of NAD to NADH. The reduced NADH is then exchanged with the second NAD, and the thioester is attacked by a nucleophilic inorganic phosphate to produce BPG. The chain is Glyceraldehyde-3-phosphate dehydrogenase (gapA) from Staphylococcus aureus.